Here is a 151-residue protein sequence, read N- to C-terminus: UPF0208 membrane protein PC1_2779 (151 aa).

Transmembrane regions (helical) follow at residues 46–66 (FGIR…IALG) and 69–89 (LGPA…GLWW).

It belongs to the UPF0208 family.

The protein resides in the cell inner membrane. The protein is UPF0208 membrane protein PC1_2779 of Pectobacterium carotovorum subsp. carotovorum (strain PC1).